A 388-amino-acid chain; its full sequence is Palmitoyltransferase ZDHHC18 (388 aa).

Residues Met1–Arg67 are disordered. Residues Met1–His90 lie on the Cytoplasmic side of the membrane. The span at Ser10–Pro27 shows a compositional bias: low complexity. Ser19 is modified (phosphoserine). Over residues Ala28–Pro46 the composition is skewed to pro residues. The chain crosses the membrane as a helical span at residues Gly91–Phe111. The Lumenal portion of the chain corresponds to Asp112–Lys119. Residues Leu120 to Leu140 form a helical membrane-spanning segment. Topologically, residues Gln141–Arg235 are cytoplasmic. Residues Lys192–Leu242 enclose the DHHC domain. Cys222 (S-palmitoyl cysteine intermediate) is an active-site residue. The chain crosses the membrane as a helical span at residues Phe236–Val256. Topologically, residues Thr257–Ala277 are lumenal. Residues Ser278–Phe298 form a helical membrane-spanning segment. Residues His299–Pro388 are Cytoplasmic-facing. The tract at residues Leu364–Pro388 is disordered. Basic and acidic residues predominate over residues Arg369 to Pro379.

It belongs to the DHHC palmitoyltransferase family. ERF2/ZDHHC9 subfamily. As to expression, widely expressed.

The protein localises to the golgi apparatus membrane. The enzyme catalyses L-cysteinyl-[protein] + hexadecanoyl-CoA = S-hexadecanoyl-L-cysteinyl-[protein] + CoA. Functionally, palmitoyltransferase that catalyzes the addition of palmitate onto various protein substrates, such as CGAS, HRAS and LCK. Acts as a negative regulator of the cGAS-STING pathway be mediating palmitoylation and inactivation of CGAS. May also have a palmitoyltransferase activity toward the beta-2 adrenergic receptor/ADRB2 and therefore regulate G protein-coupled receptor signaling. In Homo sapiens (Human), this protein is Palmitoyltransferase ZDHHC18.